A 243-amino-acid chain; its full sequence is Small ribosomal subunit protein uS3 (243 aa).

The KH type-2 domain occupies 22-93; that stretch reads LNEFLTRELA…SVELYAEKVA (72 aa). The interval 195-243 is disordered; that stretch reads QQGKNGPKKPQPDHILVTEPKDEPAPLEPTSDIRSLAPAPLPQPVAAVA.

It belongs to the universal ribosomal protein uS3 family.

This chain is Small ribosomal subunit protein uS3 (RpS3), found in Manduca sexta (Tobacco hawkmoth).